Reading from the N-terminus, the 473-residue chain is Psoralen synthase (473 aa).

A helical transmembrane segment spans residues Tyr1–Val17. The interval Thr350 to Val355 is substrate specificity. Cys425 is a heme binding site.

This sequence belongs to the cytochrome P450 family. The cofactor is heme.

It localises to the microsome membrane. The catalysed reaction is (7S)-marmesin + reduced [NADPH--hemoprotein reductase] + O2 = psoralen + acetone + oxidized [NADPH--hemoprotein reductase] + 2 H2O + H(+). It participates in secondary metabolite biosynthesis. In terms of biological role, involved in the biosynthesis of coumarins and furanocoumarins (FCs), natural products required for defense responses against attacks by predators with potential medical and agroindustrial usages such as anticoagulant, rodenticide and artificial vanilla substitutes. Involved in linear furanocumarin (psoralen) biosynthesis. Converts marmesin to psoralen and, with much lower affinity, 5-hydroxymarmesin to bergaptol. The chain is Psoralen synthase from Pastinaca sativa (Wild parsnip).